Reading from the N-terminus, the 78-residue chain is Lantibiotic cinnamycin (78 aa).

Positions 1–59 (MTASILQQSVVDADFRAALLENPAAFGASAAALPTPVEAQDQASLDFWTKDIAATEAFA) are excised as a propeptide. 2 consecutive cross-links (beta-methyllanthionine (Cys-Thr)) follow at residues 60–77 (CRQSCSFGPFTFVCDGNT) and 64–70 (CSFGPFT). A cross-link (lanthionine (Ser-Cys)) is located at residues 63–73 (SCSFGPFTFVC). Residues 65 to 78 (SFGPFTFVCDGNTK) constitute a cross-link (lysinoalanine (Ser-Lys)). A (3R)-3-hydroxyaspartate modification is found at Asp-74.

The protein belongs to the type B lantibiotic family. Maturation of lantibiotics involves the enzymatic conversion of Thr, and Ser into dehydrated AA and the formation of thioether bonds with cysteine or the formation of dialkylamine bonds with lysine. This is followed by membrane translocation and cleavage of the modified precursor.

In terms of biological role, can act as inhibitor of the enzyme phospholipase A2, and of the angiotensin-converting enzyme. Shows inhibitory activities against herpes simplex virus and immunopotentiating activities. Its antimicrobial activities are not very pronounced. This chain is Lantibiotic cinnamycin (cinA), found in Streptomyces griseoverticillatus (Streptoverticillium griseoverticillatum).